Reading from the N-terminus, the 457-residue chain is 3-isopropylmalate dehydratase large subunit (457 aa).

Cysteine 337, cysteine 397, and cysteine 400 together coordinate [4Fe-4S] cluster.

Belongs to the aconitase/IPM isomerase family. LeuC type 1 subfamily. Heterodimer of LeuC and LeuD. The cofactor is [4Fe-4S] cluster.

It catalyses the reaction (2R,3S)-3-isopropylmalate = (2S)-2-isopropylmalate. It functions in the pathway amino-acid biosynthesis; L-leucine biosynthesis; L-leucine from 3-methyl-2-oxobutanoate: step 2/4. Functionally, catalyzes the isomerization between 2-isopropylmalate and 3-isopropylmalate, via the formation of 2-isopropylmaleate. The sequence is that of 3-isopropylmalate dehydratase large subunit from Oenococcus oeni (strain ATCC BAA-331 / PSU-1).